Here is a 492-residue protein sequence, read N- to C-terminus: Regulatory protein ViaA (492 aa).

Belongs to the ViaA family. As to quaternary structure, homodimer. Interacts with RavA.

It localises to the cytoplasm. Component of the RavA-ViaA chaperone complex, which may act on the membrane to optimize the function of some of the respiratory chains. ViaA stimulates the ATPase activity of RavA. The chain is Regulatory protein ViaA from Pectobacterium atrosepticum (strain SCRI 1043 / ATCC BAA-672) (Erwinia carotovora subsp. atroseptica).